The primary structure comprises 1026 residues: Multidrug resistance protein MdtC (1026 aa).

The Cytoplasmic portion of the chain corresponds to 1-6 (MRFFAL). A helical transmembrane segment spans residues 7–29 (FIYRPVATILIAAAITLCGILGF). The Periplasmic portion of the chain corresponds to 30 to 335 (RLLPVAPLPQ…TIRASLQEVE (306 aa)). A helical transmembrane segment spans residues 336 to 353 (ETLAISVALVILVVFLFL). Over 354 to 359 (RSGRAT) the chain is Cytoplasmic. The chain crosses the membrane as a helical span at residues 360-379 (LIPAVAVPVSLIGTFAAMYL). Topologically, residues 380-388 (CGFSLNNLS) are periplasmic. Residues 389 to 411 (LMALTIATGFVVDDAIVVLENIA) traverse the membrane as a helical segment. Topologically, residues 412–430 (RHLEAGMKPLQAALQGTRE) are cytoplasmic. The chain crosses the membrane as a helical span at residues 431-453 (VGFTVISMSLSLVAVFLPLLLMG). Residues 454–467 (GLPGRLLREFAVTL) are Periplasmic-facing. A helical transmembrane segment spans residues 468–490 (SVAIGISLVVSLTLTPMMCGWML). Topologically, residues 491-852 (KSSKPRTQPR…QVFQQTMNSQ (362 aa)) are cytoplasmic. A helical transmembrane segment spans residues 853–875 (LILIVAAIATVYIVLGILYESYV). Over 876–894 (HPLTILSTLPSAGVGALLA) the chain is Periplasmic. The chain crosses the membrane as a helical span at residues 895-917 (LELFNAPFSLIALIGIMLLIGIV). Over 918 to 947 (KKNAIMMVDFALEAQRSGGLTPEQAIFQAC) the chain is Cytoplasmic. Residues 948–970 (LLRFRPIMMTTLAALFGALPLVL) form a helical membrane-spanning segment. Over 971–984 (SGGDGSELRQPLGI) the chain is Periplasmic. A helical membrane pass occupies residues 985–1007 (TIVGGLVMSQLLTLYTTPVVYLF). Residues 1008–1026 (FDRLRLRFSRKNSKPVVEI) lie on the Cytoplasmic side of the membrane.

It belongs to the resistance-nodulation-cell division (RND) (TC 2.A.6) family. MdtC subfamily. Part of a tripartite efflux system composed of MdtA, MdtB and MdtC. MdtC forms a heteromultimer with MdtB.

It is found in the cell inner membrane. The protein is Multidrug resistance protein MdtC of Salmonella typhimurium (strain LT2 / SGSC1412 / ATCC 700720).